A 187-amino-acid polypeptide reads, in one-letter code: UPF0200 protein PYRAB09750 (187 aa).

Residue 7–14 (GMPGSGKG) participates in ATP binding.

The protein belongs to the UPF0200 family.

The chain is UPF0200 protein PYRAB09750 from Pyrococcus abyssi (strain GE5 / Orsay).